A 154-amino-acid chain; its full sequence is N-acetylneuraminate anomerase NanQ (154 aa).

This sequence belongs to the NanQ anomerase family. The cofactor is Zn(2+).

The protein resides in the cytoplasm. The catalysed reaction is N-acetyl-alpha-neuraminate = aceneuramate. It carries out the reaction N-acetyl-beta-neuraminate = aceneuramate. With respect to regulation, inhibited by 1,10-phenanthroline. Opens both the alpha- and beta-forms of N-acetylneuraminate (sialic acid; Neu5Ac) to provide aceneuramate, the preferred substrate for NanA. Has preferential activity on the beta-anomer rather than the alpha-anomer. Accelerates a reaction that is spontaneous at slightly alkaline pH, facilitates the reaction at acidic pH. The polypeptide is N-acetylneuraminate anomerase NanQ (Escherichia coli (strain K12)).